The sequence spans 425 residues: MGPRRLLLVAACFSLCGPLLSARTRARRPESKATNATLDPRSFLLRNPNDKYEPFWEDEEKNESGLTEYRLVSINKSSPLQKQLPAFISEDASGYLTSSWLTLFVPSVYTGVFVVSLPLNIMAIVVFILKMKVKKPAVVYMLHLATADVLFVSVLPFKISYYFSGSDWQFGSELCRFVTAAFYCNMYASILLMTVISIDRFLAVVYPMQSLSWRTLGRASFTCLAIWALAIAGVVPLLLKEQTIQVPGLNITTCHDVLNETLLEGYYAYYFSAFSAVFFFVPLIISTVCYVSIIRCLSSSAVANRSKKSRALFLSAAVFCIFIICFGPTNVLLIAHYSFLSHTSTTEAAYFAYLLCVCVSSISCCIDPLIYYYASSECQRYVYSILCCKESSDPSSYNSSGQLMASKMDTCSSNLNNSIYKKLLT.

Positions 1–21 are cleaved as a signal peptide; sequence MGPRRLLLVAACFSLCGPLLS. A propeptide spanning residues 22-41 is cleaved from the precursor; it reads ARTRARRPESKATNATLDPR. N-linked (GlcNAc...) asparagine glycosylation is found at Asn-35, Asn-62, and Asn-75. Residues 42-102 are Extracellular-facing; sequence SFLLRNPNDK…SGYLTSSWLT (61 aa). Residues 103–128 traverse the membrane as a helical segment; the sequence is LFVPSVYTGVFVVSLPLNIMAIVVFI. Residues 129–137 are Cytoplasmic-facing; it reads LKMKVKKPA. A helical membrane pass occupies residues 138 to 157; it reads VVYMLHLATADVLFVSVLPF. Over 158–176 the chain is Extracellular; it reads KISYYFSGSDWQFGSELCR. A disulfide bridge links Cys-175 with Cys-254. Residues 177–198 form a helical membrane-spanning segment; sequence FVTAAFYCNMYASILLMTVISI. Residues 199–218 are Cytoplasmic-facing; sequence DRFLAVVYPMQSLSWRTLGR. The chain crosses the membrane as a helical span at residues 219-239; that stretch reads ASFTCLAIWALAIAGVVPLLL. Topologically, residues 240 to 268 are extracellular; the sequence is KEQTIQVPGLNITTCHDVLNETLLEGYYA. N-linked (GlcNAc...) asparagine glycosylation is found at Asn-250 and Asn-259. The helical transmembrane segment at 269–288 threads the bilayer; sequence YYFSAFSAVFFFVPLIISTV. The Cytoplasmic segment spans residues 289-311; it reads CYVSIIRCLSSSAVANRSKKSRA. The helical transmembrane segment at 312–334 threads the bilayer; it reads LFLSAAVFCIFIICFGPTNVLLI. Over 335–350 the chain is Extracellular; sequence AHYSFLSHTSTTEAAY. The helical transmembrane segment at 351–374 threads the bilayer; that stretch reads FAYLLCVCVSSISCCIDPLIYYYA. Over 375–425 the chain is Cytoplasmic; sequence SSECQRYVYSILCCKESSDPSSYNSSGQLMASKMDTCSSNLNNSIYKKLLT. A Phosphoserine modification is found at Ser-418.

Belongs to the G-protein coupled receptor 1 family. In terms of processing, proteolytic cleavage by thrombin generates a new N-terminus that functions as a tethered ligand. Also proteolytically cleaved by cathepsin CTSG. Cleavage at 41-Arg-|-Ser-42 by CTSG results in receptor activation while cleavage at 55-Phe-|-Trp-56 results in inhibition of receptor activation. Phosphorylated in the C-terminal tail; probably mediating desensitization prior to the uncoupling and internalization of the receptor. Platelets and vascular endothelial cells.

The protein resides in the cell membrane. Its function is as follows. High affinity receptor that binds the activated thrombin, leading to calcium release from intracellular stores. The thrombin-activated receptor signaling pathway is mediated through PTX-insensitive G proteins, activation of phospholipase C resulting in the production of 1D-myo-inositol 1,4,5-trisphosphate (InsP3) which binds to InsP3 receptors causing calcium release from the stores. In astrocytes, the calcium released into the cytosol allows the Ca(2+)-dependent release of L-glutamate into the synaptic cleft through BEST1, that targets the neuronal postsynaptic GRIN2A/NMDAR receptor resulting in the synaptic plasticity regulation. May play a role in platelets activation and in vascular development. Mediates up-regulation of pro-inflammatory cytokines, such as MCP-1/CCL2 and IL6, triggered by coagulation factor Xa (F10) in cardiac fibroblasts and umbilical vein endothelial cells. This Homo sapiens (Human) protein is Proteinase-activated receptor 1.